The sequence spans 409 residues: Putative competence-damage inducible protein (409 aa).

The protein belongs to the CinA family.

This is Putative competence-damage inducible protein from Clostridium botulinum (strain 657 / Type Ba4).